Consider the following 299-residue polypeptide: Oxygen-dependent coproporphyrinogen-III oxidase (299 aa).

S92 provides a ligand contact to substrate. A divalent metal cation is bound by residues H96 and H106. H106 functions as the Proton donor in the catalytic mechanism. 108-110 (NVR) serves as a coordination point for substrate. H145 and H175 together coordinate a divalent metal cation. The segment at 239-274 (YVEFNLVYDRGTLFGLQSGGRAESILMSLPPRVRWE) is important for dimerization. Substrate is bound at residue 257–259 (GGR).

This sequence belongs to the aerobic coproporphyrinogen-III oxidase family. Homodimer. It depends on a divalent metal cation as a cofactor.

It localises to the cytoplasm. It carries out the reaction coproporphyrinogen III + O2 + 2 H(+) = protoporphyrinogen IX + 2 CO2 + 2 H2O. It functions in the pathway porphyrin-containing compound metabolism; protoporphyrin-IX biosynthesis; protoporphyrinogen-IX from coproporphyrinogen-III (O2 route): step 1/1. Its function is as follows. Involved in the heme biosynthesis. Catalyzes the aerobic oxidative decarboxylation of propionate groups of rings A and B of coproporphyrinogen-III to yield the vinyl groups in protoporphyrinogen-IX. The chain is Oxygen-dependent coproporphyrinogen-III oxidase from Xanthomonas euvesicatoria pv. vesicatoria (strain 85-10) (Xanthomonas campestris pv. vesicatoria).